The sequence spans 392 residues: DNA-directed RNA polymerase subunit Rpo1C (392 aa).

Belongs to the RNA polymerase beta' chain family. Part of the 13-subunit RNA polymerase complex.

It is found in the cytoplasm. It carries out the reaction RNA(n) + a ribonucleoside 5'-triphosphate = RNA(n+1) + diphosphate. DNA-dependent RNA polymerase (RNAP) catalyzes the transcription of DNA into RNA using the four ribonucleoside triphosphates as substrates. Forms part of the jaw domain. This Saccharolobus solfataricus (strain ATCC 35092 / DSM 1617 / JCM 11322 / P2) (Sulfolobus solfataricus) protein is DNA-directed RNA polymerase subunit Rpo1C.